A 419-amino-acid polypeptide reads, in one-letter code: MKNQLRGPPARAHMSTSGAAAAGGTRAGSEPGAGSGSGAGTGAGAATGAGAMPCKSAEWLQEELEARGGASLLLLDCRPHELFESSHIETAINLAIPGLMLRRLRKGNLPIRSIIPNHADKERFATRCKAATVLLYDEATAEWQPEPGAPASVLGLLLQKLRDDGCQAYYLQGGFNKFQTEYSEHCETNVDSSSSPSSSPPTSVLGLGGLRISSDCSDGESDRELPSSATESDGSPVPSSQPAFPVQILPYLYLGCAKDSTNLDVLGKYGIKYILNVTPNLPNAFEHGGEFTYKQIPISDHWSQNLSQFFPEAISFIDEARSKKCGVLVHCLAGISRSVTVTVAYLMQKMNLSLNDAYDFVKRKKSNISPNFNFMGQLLDFERTLGLSSPCDNHASSEQLYFSTPTNHNLFPLNTLEST.

The tract at residues Met-1 to Thr-47 is disordered. The span at Ala-10–Ser-29 shows a compositional bias: low complexity. Residues Pro-31–Thr-47 are compositionally biased toward gly residues. The Rhodanese domain occupies Gly-68–Glu-187. The tract at residues Cys-216–Ser-240 is disordered. Residues Ser-227–Ser-240 are compositionally biased toward polar residues. A Tyrosine-protein phosphatase domain is found at Phe-244–Leu-387. Residue Cys-331 is the Phosphocysteine intermediate of the active site. Cys-331–Arg-337 contributes to the substrate binding site.

The protein belongs to the protein-tyrosine phosphatase family. Non-receptor class dual specificity subfamily. As to quaternary structure, interacts with MAPK1/ERK2; the interaction enhances DUSP7 phosphatase activity. Strongly expressed in liver. Expressed at significantly higher levels in malignant hematopoietic cells than in corresponding non-malignant cells.

It localises to the cytoplasm. It catalyses the reaction O-phospho-L-tyrosyl-[protein] + H2O = L-tyrosyl-[protein] + phosphate. It carries out the reaction O-phospho-L-seryl-[protein] + H2O = L-seryl-[protein] + phosphate. The enzyme catalyses O-phospho-L-threonyl-[protein] + H2O = L-threonyl-[protein] + phosphate. With respect to regulation, strongly inhibited by sodium orthovanadate. Its function is as follows. Dual specificity protein phosphatase. Shows high activity towards MAPK1/ERK2. Also has lower activity towards MAPK14 and MAPK8. In arrested oocytes, plays a role in meiotic resumption. Promotes nuclear envelope breakdown and activation of the CDK1/Cyclin-B complex in oocytes, probably by dephosphorylating and inactivating the conventional protein kinase C (cPKC) isozyme PRKCB. May also inactivate PRKCA and/or PRKCG. Also important in oocytes for normal chromosome alignment on the metaphase plate and progression to anaphase, where it might regulate activity of the spindle-assembly checkpoint (SAC) complex. This Homo sapiens (Human) protein is Dual specificity protein phosphatase 7.